The sequence spans 1102 residues: Endocytosis protein end4 (1102 aa).

Positions 9 to 139 (DHMQSDASLM…SFHAQHPEFN (131 aa)) constitute an ENTH domain. The interval 265 to 334 (PHDPPDLEGD…SEPEPIQDFW (70 aa)) is disordered. Residues 292-305 (TGASTIAPQPTGTS) are compositionally biased toward polar residues. A coiled-coil region spans residues 338–661 (TLDQQLAAQQ…ESLLQLSKLQ (324 aa)). The 243-residue stretch at 858–1100 (LLNAPGENIE…DMRKTSYHVA (243 aa)) folds into the I/LWEQ domain.

The protein belongs to the SLA2 family.

It localises to the cytoplasm. Its subcellular location is the cytoskeleton. In terms of biological role, required for cellular morphogenesis and polarization of the cortical cytoskeleton. Required for establishment of new polarized growth zones where it acts in actin organization. Involved plasma membrane internalization and is essential for fluid-phase endocytosis. In Schizosaccharomyces pombe (strain 972 / ATCC 24843) (Fission yeast), this protein is Endocytosis protein end4 (end4).